A 745-amino-acid chain; its full sequence is Probable GMP synthase [glutamine-hydrolyzing] (745 aa).

A disordered region spans residues 1-37; it reads MKRSSSMLDINEDSQHSTNKAPPPKKAPEDRFDSANM. In terms of domain architecture, Glutamine amidotransferase type-1 spans 60–252; sequence RIAILDFGAQ…LFKVVGCCGN (193 aa). Residue Cys-138 is the For GATase activity of the active site. Active-site residues include His-226 and Glu-228. Positions 253–461 constitute a GMPS ATP-PPase domain; it reads FTIQNREQSC…LGLPESIVQR (209 aa). 280–286 serves as a coordination point for ATP; it reads SGGVDSA. The substrate site is built by Arg-363, Asp-563, Gln-662, Lys-737, and Glu-743.

As to quaternary structure, homodimer.

The catalysed reaction is XMP + L-glutamine + ATP + H2O = GMP + L-glutamate + AMP + diphosphate + 2 H(+). It functions in the pathway purine metabolism; GMP biosynthesis; GMP from XMP (L-Gln route): step 1/1. The sequence is that of Probable GMP synthase [glutamine-hydrolyzing] (gmps-1) from Caenorhabditis elegans.